The chain runs to 298 residues: MTDAPVISPIDQARILSEALPHMQRYDEETIVIKYGGHAMGAENDAKAFARDIVLLEQTAVNPVVVHGGGPQIATMLKRLGIKSEFAAGLRITDGATIEIVEMVLAGSINKQLVGYINEAGGKAVGLCGKDGNMVTASKATRTMVDPDSRIEEVVDLGFVGEPEKVDLTLLNQLIGHELIPVLAPLATSATGQTFNVNADTFAGAVAGALKAKRLLLLTDVPGVLDKSKQLIPELSIKDARKLIADGTISGGMIPKVETCIYALEQGVEGVVILDGKVPHAVLLELFTNQGTGTLIHK.

Residues 69–70, R91, and N196 contribute to the substrate site; that span reads GG.

The protein belongs to the acetylglutamate kinase family. ArgB subfamily.

The protein resides in the cytoplasm. The catalysed reaction is N-acetyl-L-glutamate + ATP = N-acetyl-L-glutamyl 5-phosphate + ADP. The protein operates within amino-acid biosynthesis; L-arginine biosynthesis; N(2)-acetyl-L-ornithine from L-glutamate: step 2/4. Its function is as follows. Catalyzes the ATP-dependent phosphorylation of N-acetyl-L-glutamate. In Rhodopseudomonas palustris (strain BisB5), this protein is Acetylglutamate kinase.